Reading from the N-terminus, the 448-residue chain is N-succinylarginine dihydrolase (448 aa).

Substrate is bound by residues 19–28 (GGLSYGNVAS), Asn-110, and 137–138 (HR). Residue Glu-174 is part of the active site. Arg-214 is a binding site for substrate. The active site involves His-250. Residues Asp-252 and Asn-365 each contribute to the substrate site. Cys-371 (nucleophile) is an active-site residue.

This sequence belongs to the succinylarginine dihydrolase family. In terms of assembly, homodimer.

The enzyme catalyses N(2)-succinyl-L-arginine + 2 H2O + 2 H(+) = N(2)-succinyl-L-ornithine + 2 NH4(+) + CO2. It functions in the pathway amino-acid degradation; L-arginine degradation via AST pathway; L-glutamate and succinate from L-arginine: step 2/5. Functionally, catalyzes the hydrolysis of N(2)-succinylarginine into N(2)-succinylornithine, ammonia and CO(2). This is N-succinylarginine dihydrolase from Ectopseudomonas mendocina (strain ymp) (Pseudomonas mendocina).